Consider the following 1217-residue polypeptide: ATP-dependent helicase/nuclease subunit A (1217 aa).

In terms of domain architecture, UvrD-like helicase ATP-binding spans 10-475; the sequence is VIWTDAQWQS…IDLSQNFRSR (466 aa). 31–38 is an ATP binding site; it reads AAAGSGKT. Positions 476 to 786 constitute a UvrD-like helicase C-terminal domain; that stretch reads KEVLSTTNYI…RMMTIHSSKG (311 aa).

Belongs to the helicase family. AddA subfamily. Heterodimer of AddA and AddB/RexB. Mg(2+) is required as a cofactor.

The enzyme catalyses Couples ATP hydrolysis with the unwinding of duplex DNA by translocating in the 3'-5' direction.. It catalyses the reaction ATP + H2O = ADP + phosphate + H(+). Functionally, the heterodimer acts as both an ATP-dependent DNA helicase and an ATP-dependent, dual-direction single-stranded exonuclease. Recognizes the chi site generating a DNA molecule suitable for the initiation of homologous recombination. The AddA nuclease domain is required for chi fragment generation; this subunit has the helicase and 3' -&gt; 5' nuclease activities. The sequence is that of ATP-dependent helicase/nuclease subunit A from Staphylococcus aureus (strain NCTC 8325 / PS 47).